Consider the following 522-residue polypeptide: Maturase K (522 aa).

It belongs to the intron maturase 2 family. MatK subfamily.

The protein resides in the plastid. It localises to the chloroplast. Its function is as follows. Usually encoded in the trnK tRNA gene intron. Probably assists in splicing its own and other chloroplast group II introns. The protein is Maturase K of Iris domestica (Leopard lily).